The primary structure comprises 237 residues: Urease accessory protein UreF (237 aa).

It belongs to the UreF family. In terms of assembly, ureD, UreF and UreG form a complex that acts as a GTP-hydrolysis-dependent molecular chaperone, activating the urease apoprotein by helping to assemble the nickel containing metallocenter of UreC. The UreE protein probably delivers the nickel.

The protein localises to the cytoplasm. Functionally, required for maturation of urease via the functional incorporation of the urease nickel metallocenter. The polypeptide is Urease accessory protein UreF (Rhodopseudomonas palustris (strain HaA2)).